Here is a 57-residue protein sequence, read N- to C-terminus: UPF0434 protein swp_2279 (57 aa).

This sequence belongs to the UPF0434 family.

This chain is UPF0434 protein swp_2279, found in Shewanella piezotolerans (strain WP3 / JCM 13877).